Reading from the N-terminus, the 214-residue chain is Pyrrolidone-carboxylate peptidase (214 aa).

Catalysis depends on residues E78, C141, and H165.

It belongs to the peptidase C15 family. In terms of assembly, homotetramer.

It is found in the cytoplasm. The enzyme catalyses Release of an N-terminal pyroglutamyl group from a polypeptide, the second amino acid generally not being Pro.. In terms of biological role, removes 5-oxoproline from various penultimate amino acid residues except L-proline. This chain is Pyrrolidone-carboxylate peptidase, found in Streptococcus pneumoniae (strain 70585).